The chain runs to 236 residues: Purine nucleoside phosphorylase DeoD-type 2 (236 aa).

Position 5 (histidine 5) interacts with a purine D-ribonucleoside. Phosphate is bound by residues glycine 21, arginine 25, arginine 44, and 88-91 (RVGS). Residues 180–182 (DME) and 204–205 (SD) each bind a purine D-ribonucleoside. The active-site Proton donor is the aspartate 205.

The protein belongs to the PNP/UDP phosphorylase family. As to quaternary structure, homohexamer; trimer of homodimers.

The catalysed reaction is a purine D-ribonucleoside + phosphate = a purine nucleobase + alpha-D-ribose 1-phosphate. It carries out the reaction a purine 2'-deoxy-D-ribonucleoside + phosphate = a purine nucleobase + 2-deoxy-alpha-D-ribose 1-phosphate. In terms of biological role, catalyzes the reversible phosphorolytic breakdown of the N-glycosidic bond in the beta-(deoxy)ribonucleoside molecules, with the formation of the corresponding free purine bases and pentose-1-phosphate. This is Purine nucleoside phosphorylase DeoD-type 2 from Vibrio parahaemolyticus serotype O3:K6 (strain RIMD 2210633).